The sequence spans 280 residues: Pantothenate synthetase (280 aa).

31–38 (MGNLHVGH) contacts ATP. The active-site Proton donor is His38. Residue Gln62 participates in (R)-pantoate binding. Gln62 is a binding site for beta-alanine. 150–153 (GKKD) contacts ATP. Gln156 serves as a coordination point for (R)-pantoate. Residues Val179 and 187–190 (MSSR) each bind ATP.

This sequence belongs to the pantothenate synthetase family. Homodimer.

The protein resides in the cytoplasm. The catalysed reaction is (R)-pantoate + beta-alanine + ATP = (R)-pantothenate + AMP + diphosphate + H(+). Its pathway is cofactor biosynthesis; (R)-pantothenate biosynthesis; (R)-pantothenate from (R)-pantoate and beta-alanine: step 1/1. Its function is as follows. Catalyzes the condensation of pantoate with beta-alanine in an ATP-dependent reaction via a pantoyl-adenylate intermediate. This chain is Pantothenate synthetase, found in Xanthomonas oryzae pv. oryzae (strain KACC10331 / KXO85).